The primary structure comprises 174 residues: NADH-ubiquinone oxidoreductase chain 6 (174 aa).

The next 5 membrane-spanning stretches (helical) occupy residues 4–24 (LIIM…KHPL), 25–45 (SMGL…GIYV), 48–68 (FWFS…LFIY), 82–102 (FNLT…FFII), and 143–163 (LITL…VKIT).

The protein belongs to the complex I subunit 6 family.

Its subcellular location is the mitochondrion membrane. The enzyme catalyses a ubiquinone + NADH + 5 H(+)(in) = a ubiquinol + NAD(+) + 4 H(+)(out). In terms of biological role, core subunit of the mitochondrial membrane respiratory chain NADH dehydrogenase (Complex I) that is believed to belong to the minimal assembly required for catalysis. Complex I functions in the transfer of electrons from NADH to the respiratory chain. The immediate electron acceptor for the enzyme is believed to be ubiquinone. The protein is NADH-ubiquinone oxidoreductase chain 6 (ND6) of Anopheles quadrimaculatus (Common malaria mosquito).